A 376-amino-acid chain; its full sequence is Erythronate-4-phosphate dehydrogenase (376 aa).

Residues serine 45 and threonine 67 each coordinate substrate. NAD(+) is bound by residues 127–128 (QV), aspartate 147, and threonine 176. Arginine 209 is a catalytic residue. NAD(+) is bound at residue aspartate 233. Residue glutamate 238 is part of the active site. Histidine 255 (proton donor) is an active-site residue. Glycine 258 is an NAD(+) binding site. Tyrosine 259 is a substrate binding site.

It belongs to the D-isomer specific 2-hydroxyacid dehydrogenase family. PdxB subfamily. As to quaternary structure, homodimer.

The protein resides in the cytoplasm. The catalysed reaction is 4-phospho-D-erythronate + NAD(+) = (R)-3-hydroxy-2-oxo-4-phosphooxybutanoate + NADH + H(+). The protein operates within cofactor biosynthesis; pyridoxine 5'-phosphate biosynthesis; pyridoxine 5'-phosphate from D-erythrose 4-phosphate: step 2/5. In terms of biological role, catalyzes the oxidation of erythronate-4-phosphate to 3-hydroxy-2-oxo-4-phosphonooxybutanoate. The protein is Erythronate-4-phosphate dehydrogenase of Aliivibrio salmonicida (strain LFI1238) (Vibrio salmonicida (strain LFI1238)).